Reading from the N-terminus, the 514-residue chain is RNA-binding region-containing protein 3 (514 aa).

Residues 1–26 (MAGPEPPMPLSRGGPGSASLSPPRGD) are disordered. At Ser21 the chain carries Phosphoserine. In terms of domain architecture, RRM 1 spans 27–102 (RTLLVRHLPA…HTLVVEFAKE (76 aa)). 3 disordered regions span residues 106 to 133 (VHSP…EKKE), 213 to 282 (MPLH…VRKK), and 337 to 363 (ETQP…FGKI). A Phosphoserine modification is found at Ser108. Positions 115 to 133 (TEKKKRLDDTVENDKEKKE) are enriched in basic and acidic residues. Pro residues predominate over residues 217–230 (APLPPTSPQPPEEP). The residue at position 349 (Ser349) is a Phosphoserine. The region spanning 418–501 (CRIYVKNLAR…KPMVVQFARS (84 aa)) is the RRM 2 domain.

In terms of assembly, component of the U11/U12 snRNPs that are part of the U12-type spliceosome. Found in a complex with m(7)G-capped U12 snRNA. Interacts with PDCD7.

It localises to the nucleus. Functionally, participates in pre-mRNA U12-dependent splicing, performed by the minor spliceosome which removes U12-type introns. U12-type introns comprises less than 1% of all non-coding sequences. Binds to the 3'-stem-loop of m(7)G-capped U12 snRNA. This chain is RNA-binding region-containing protein 3 (Rnpc3), found in Mus musculus (Mouse).